We begin with the raw amino-acid sequence, 217 residues long: Proteasome subunit beta type-6-B like protein (217 aa).

A propeptide spans Met-1 to Gly-16 (removed in mature form). Thr-17 functions as the Nucleophile in the catalytic mechanism.

The protein belongs to the peptidase T1B family. As to quaternary structure, the 26S proteasome consists of a 20S proteasome core and two 19S regulatory subunits. The 20S proteasome core is composed of 28 subunits that are arranged in four stacked rings, resulting in a barrel-shaped structure. The two end rings are each formed by seven alpha subunits, and the two central rings are each formed by seven beta subunits. The catalytic chamber with the active sites is on the inside of the barrel.

It localises to the cytoplasm. It is found in the nucleus. It carries out the reaction Cleavage of peptide bonds with very broad specificity.. Its function is as follows. The proteasome is a multicatalytic proteinase complex which is characterized by its ability to cleave peptides with Arg, Phe, Tyr, Leu, and Glu adjacent to the leaving group at neutral or slightly basic pH. The proteasome has an ATP-dependent proteolytic activity. This subunit is involved in antigen processing to generate class I binding peptides. This chain is Proteasome subunit beta type-6-B like protein (psmb6l-b), found in Salmo salar (Atlantic salmon).